A 134-amino-acid polypeptide reads, in one-letter code: Endoribonuclease YbeY (134 aa).

H94, H98, and H104 together coordinate Zn(2+).

This sequence belongs to the endoribonuclease YbeY family. Zn(2+) serves as cofactor.

The protein localises to the cytoplasm. Its function is as follows. Single strand-specific metallo-endoribonuclease involved in late-stage 70S ribosome quality control and in maturation of the 3' terminus of the 16S rRNA. The chain is Endoribonuclease YbeY from Campylobacter fetus subsp. fetus (strain 82-40).